The following is a 515-amino-acid chain: Nuclear hormone receptor family member nhr-62 (515 aa).

The nuclear receptor DNA-binding region spans 95–170; it reads NLVCVVCGDQ…AGMNPRAVQS (76 aa). NR C4-type zinc fingers lie at residues 98–118 and 134–153; these read CVVC…CNGC and CRFE…CRAC. The disordered stretch occupies residues 169-195; it reads QSERVEREQNGSPNQIEEDDYKDLSSP. The NR LBD domain occupies 225–509; the sequence is EMAKLSEQIV…YLCHEVQFIQ (285 aa). The interval 498 to 509 is AF-2; it reads SEYLCHEVQFIQ.

Belongs to the nuclear hormone receptor family. Widely expressed at a low level in many tissues including the pharynx, sensory neurons, intestine, spermatheca, hypodermis, and excretory cell.

It localises to the nucleus. Its function is as follows. Orphan nuclear hormone receptor. Required for metabolic and physiologic responses associated with dietary-restriction-induced longevity. Modulates triglyceride and lipid metabolism and autophagy, associated with dietary-restriction, probably acting via regulation of transcription of target genes. The polypeptide is Nuclear hormone receptor family member nhr-62 (nhr-62) (Caenorhabditis elegans).